The following is a 358-amino-acid chain: Alanine racemase (358 aa).

The Proton acceptor; specific for D-alanine role is filled by Lys35. Lys35 carries the N6-(pyridoxal phosphate)lysine modification. Arg130 is a binding site for substrate. Tyr255 serves as the catalytic Proton acceptor; specific for L-alanine. Residue Met303 coordinates substrate.

It belongs to the alanine racemase family. Requires pyridoxal 5'-phosphate as cofactor.

It carries out the reaction L-alanine = D-alanine. It functions in the pathway amino-acid biosynthesis; D-alanine biosynthesis; D-alanine from L-alanine: step 1/1. Catalyzes the interconversion of L-alanine and D-alanine. May also act on other amino acids. This is Alanine racemase (alr) from Shewanella baltica (strain OS195).